A 727-amino-acid polypeptide reads, in one-letter code: Elongation factor 2 (727 aa).

The tr-type G domain occupies 19–260; sequence DQIRNIGICA…MVVTHLPNPV (242 aa). GTP contacts are provided by residues 28 to 35, 94 to 98, and 148 to 151; these read AHIDHGKT, DTPGH, and NKVD. The residue at position 603 (His603) is a Diphthamide.

It belongs to the TRAFAC class translation factor GTPase superfamily. Classic translation factor GTPase family. EF-G/EF-2 subfamily.

The protein resides in the cytoplasm. In terms of biological role, catalyzes the GTP-dependent ribosomal translocation step during translation elongation. During this step, the ribosome changes from the pre-translocational (PRE) to the post-translocational (POST) state as the newly formed A-site-bound peptidyl-tRNA and P-site-bound deacylated tRNA move to the P and E sites, respectively. Catalyzes the coordinated movement of the two tRNA molecules, the mRNA and conformational changes in the ribosome. This is Elongation factor 2 from Methanococcus aeolicus (strain ATCC BAA-1280 / DSM 17508 / OCM 812 / Nankai-3).